A 125-amino-acid chain; its full sequence is Holo-[acyl-carrier-protein] synthase (125 aa).

Residues Asp-8 and Glu-57 each coordinate Mg(2+).

Belongs to the P-Pant transferase superfamily. AcpS family. Mg(2+) is required as a cofactor.

The protein localises to the cytoplasm. It catalyses the reaction apo-[ACP] + CoA = holo-[ACP] + adenosine 3',5'-bisphosphate + H(+). Functionally, transfers the 4'-phosphopantetheine moiety from coenzyme A to a Ser of acyl-carrier-protein. This Dechloromonas aromatica (strain RCB) protein is Holo-[acyl-carrier-protein] synthase.